Reading from the N-terminus, the 82-residue chain is M-theraphotoxin-Gr1a (82 aa).

A signal peptide spans 1 to 21 (MKTSVVFVIAGLALLSVVCYA). Residues 22–46 (SELKEQSSVNEVLSTIFHFEQPEER) constitute a propeptide that is removed on maturation. Disulfide bonds link Cys48/Cys63, Cys55/Cys69, and Cys62/Cys76. Position 80 is a phenylalanine amide (Phe80).

This sequence belongs to the neurotoxin 10 (Hwtx-1) family. 52 (MTx4) subfamily. In terms of tissue distribution, expressed by the venom gland.

It is found in the secreted. In terms of biological role, this cationic hydrophobic peptide acts on a lot of different channels and has an antimicrobial activity. It blocks mechanosensitive ion channels (also named stretch-activated channels or SACs), without having effect on whole-cell voltage-sensitive currents. It also affects acetylcholine receptors (nAChRs) through interactions with membrane lipids by prolonging the closing time without affecting channel conductance or opening activity. It shows high affinity for lipid bilayers. It acts by partitioning into the membrane and perturbing the interface between the channel and the lipid bilayer without necessarily being in physical contact with the channel. It inhibits atrial fibrillation as well as the membrane motor of outer hair cells at low doses. It also binds to the voltage sensor of voltage-gated potassium channels from the archaebacterium Aeropyrum pernix (KvAP) without affecting channel gating. It also shows a low inhibition on a large spectra of sodium channels (Nav1.1/SCN1A, Nav1.2/SCN2A, Nav1.3/SCN3A, Nav1.4/SCN4A, Nav1.5/SCN5A, Nav1.6/SCN8A, Nav1.7/SCN9A) (IC(50)=7.4-14 uM), and potassium channels Kv11.1/KCNH2 and Kv11.2/KCNH6 (IC(50)=11 uM for both). It exhibits antimicrobial activities against the Gram-positive bacteria B.subtilis (MIC=0.5 uM), S.aureus (MIC=2-4 uM), and S.epidermidis (MIC=4-8 uM), and Gram-negative bacteria S.typhimurium (MIC=32.64 uM), P.aeruginosa (MIC=8-16 uM), and E.coli (MIC=8-16 uM). This Grammostola rosea (Chilean rose tarantula) protein is M-theraphotoxin-Gr1a.